We begin with the raw amino-acid sequence, 148 residues long: Large ribosomal subunit protein bL9 (148 aa).

Part of the 50S ribosomal subunit.

In terms of biological role, binds to the 23S rRNA. Extends more that 50 Angstroms beyond the surface of the 70S ribosome. This Thermus thermophilus (strain ATCC 27634 / DSM 579 / HB8) protein is Large ribosomal subunit protein bL9 (rplI).